The following is a 669-amino-acid chain: UvrABC system protein B (669 aa).

A Helicase ATP-binding domain is found at 27 to 414 (ESLQGEHKFQ…EARVIEQVIR (388 aa)). 40-47 (GATGTGKT) contributes to the ATP binding site. The Beta-hairpin signature appears at 93–116 (YYDYYQPEAYIPVTDTYIEKTASI). A Helicase C-terminal domain is found at 431-597 (QVDDLYGEIQ…PINKRANNAI (167 aa)). The region spanning 628–663 (PDLIQQLEEKMQEAAKKQEFEVAAIYRDRIQHLRDR) is the UVR domain.

It belongs to the UvrB family. In terms of assembly, forms a heterotetramer with UvrA during the search for lesions. Interacts with UvrC in an incision complex.

The protein resides in the cytoplasm. Functionally, the UvrABC repair system catalyzes the recognition and processing of DNA lesions. A damage recognition complex composed of 2 UvrA and 2 UvrB subunits scans DNA for abnormalities. Upon binding of the UvrA(2)B(2) complex to a putative damaged site, the DNA wraps around one UvrB monomer. DNA wrap is dependent on ATP binding by UvrB and probably causes local melting of the DNA helix, facilitating insertion of UvrB beta-hairpin between the DNA strands. Then UvrB probes one DNA strand for the presence of a lesion. If a lesion is found the UvrA subunits dissociate and the UvrB-DNA preincision complex is formed. This complex is subsequently bound by UvrC and the second UvrB is released. If no lesion is found, the DNA wraps around the other UvrB subunit that will check the other stand for damage. The polypeptide is UvrABC system protein B (Synechocystis sp. (strain ATCC 27184 / PCC 6803 / Kazusa)).